The chain runs to 314 residues: Solute carrier family 25 member 44 (314 aa).

Solcar repeat units follow at residues 18 to 100, 107 to 210, and 220 to 302; these read KKFY…TRKF, SNTV…YAEQ, and PHIV…LKKL. Transmembrane regions (helical) follow at residues 20–42, 71–90, 113–133, 185–201, 222–239, and 278–296; these read FYVF…TLIR, AGLY…GQCY, LVAG…IDVV, GYVA…AVWW, IVFQ…ASIL, and LSAR…VVGY.

It belongs to the mitochondrial carrier (TC 2.A.29) family. In terms of tissue distribution, highly expressed in brown adipose tissues compared with other metabolic organs.

The protein resides in the mitochondrion membrane. It carries out the reaction L-valine(in) = L-valine(out). It catalyses the reaction L-leucine(in) = L-leucine(out). Its function is as follows. Mitochondrial solute transporter which transports branched-chain amino acid (BCAA; valine, leucine and isoleucine) into mitochondria in brown adipose tissue (BAT). BAT is involved in BCAA catabolism and actively utilizes BCAA in the mitochondria for thermogenesis. The sequence is that of Solute carrier family 25 member 44 from Mus musculus (Mouse).